We begin with the raw amino-acid sequence, 1822 residues long: ADP-ribosylation factor guanine nucleotide-exchange factor sec72 (1822 aa).

Disordered regions lie at residues 1–54 (MQDA…NGMD) and 66–126 (DAVV…RASL). A Phosphoserine modification is found at S44. Positions 72–84 (DINTEDSSLSPAK) are enriched in polar residues. A compositionally biased stretch (basic and acidic residues) spans 85-110 (QENEKSPEGIEQKYQEEDLKDDKKSN). A phosphoserine mark is found at S122 and S125. Positions 547-551 (NYDCD) match the HUS box motif. T597 is modified (phosphothreonine). At S653 the chain carries Phosphoserine. At T654 the chain carries Phosphothreonine. S669 bears the Phosphoserine mark. An SEC7 domain is found at 701–889 (QFESNKQRKK…GFVYDDILKN (189 aa)). An HDS1 domain region spans residues 898-1106 (ELAAIAPLMN…NARVRRKNVN (209 aa)). Residue S1110 is modified to Phosphoserine. Disordered stretches follow at residues 1111-1131 (NSIRHVSGSTSRSTRTRSLSK) and 1584-1610 (ENENTQLSHKRGGSLPETSRSISTSSI). Composition is skewed to low complexity over residues 1117–1130 (SGSTSRSTRTRSLS) and 1597–1610 (SLPETSRSISTSSI). Phosphoserine is present on residues S1606 and S1609.

Its subcellular location is the cytoplasm. The protein resides in the golgi apparatus. It is found in the trans-Golgi network. It localises to the cytoplasmic vesicle. The protein localises to the COPI-coated vesicle membrane. Its subcellular location is the COPII-coated vesicle membrane. Guanine exchange factor that acts as an activator of arf1 at the trans-Golgi net-work and is thus involved in vesicular budding and traffic between compartments of the Golgi apparatus. Activation of Arf (ADP-ribosylation factor) GTPases is essential for vesicle formation via recruitment of cargo adapters and coat proteins necessary for Golgi trafficking. Involved in the resistance to tamoxifen (TAM), an anticancer drug used to treat estrogen receptor (ER)-positive breast cancer. In Schizosaccharomyces pombe (strain 972 / ATCC 24843) (Fission yeast), this protein is ADP-ribosylation factor guanine nucleotide-exchange factor sec72.